The chain runs to 209 residues: Kynurenine formamidase (209 aa).

F18 is a substrate binding site. 3 residues coordinate Zn(2+): H48, H52, and D54. H58 serves as the catalytic Proton donor/acceptor. Zn(2+) contacts are provided by H160 and E172.

This sequence belongs to the Cyclase 1 superfamily. KynB family. Homodimer. Requires Zn(2+) as cofactor.

It carries out the reaction N-formyl-L-kynurenine + H2O = L-kynurenine + formate + H(+). It functions in the pathway amino-acid degradation; L-tryptophan degradation via kynurenine pathway; L-kynurenine from L-tryptophan: step 2/2. In terms of biological role, catalyzes the hydrolysis of N-formyl-L-kynurenine to L-kynurenine, the second step in the kynurenine pathway of tryptophan degradation. This is Kynurenine formamidase from Bordetella bronchiseptica (strain ATCC BAA-588 / NCTC 13252 / RB50) (Alcaligenes bronchisepticus).